The following is a 311-amino-acid chain: Formimidoylglutamase (311 aa).

Residues His-122, Asp-151, His-153, Asp-155, Cys-242, and Asp-244 each coordinate Mn(2+).

It belongs to the arginase family. It depends on Mn(2+) as a cofactor.

It catalyses the reaction N-formimidoyl-L-glutamate + H2O = formamide + L-glutamate. Its pathway is amino-acid degradation; L-histidine degradation into L-glutamate; L-glutamate from N-formimidoyl-L-glutamate (hydrolase route): step 1/1. In terms of biological role, catalyzes the conversion of N-formimidoyl-L-glutamate to L-glutamate and formamide. In Pseudomonas paraeruginosa (strain DSM 24068 / PA7) (Pseudomonas aeruginosa (strain PA7)), this protein is Formimidoylglutamase.